We begin with the raw amino-acid sequence, 474 residues long: ATP synthase subunit beta (474 aa).

151-158 is an ATP binding site; sequence GGAGVGKT.

Belongs to the ATPase alpha/beta chains family. As to quaternary structure, F-type ATPases have 2 components, CF(1) - the catalytic core - and CF(0) - the membrane proton channel. CF(1) has five subunits: alpha(3), beta(3), gamma(1), delta(1), epsilon(1). CF(0) has three main subunits: a(1), b(2) and c(9-12). The alpha and beta chains form an alternating ring which encloses part of the gamma chain. CF(1) is attached to CF(0) by a central stalk formed by the gamma and epsilon chains, while a peripheral stalk is formed by the delta and b chains.

The protein resides in the cell inner membrane. It carries out the reaction ATP + H2O + 4 H(+)(in) = ADP + phosphate + 5 H(+)(out). Functionally, produces ATP from ADP in the presence of a proton gradient across the membrane. The catalytic sites are hosted primarily by the beta subunits. This Ruegeria sp. (strain TM1040) (Silicibacter sp.) protein is ATP synthase subunit beta.